Here is a 492-residue protein sequence, read N- to C-terminus: Catalase isozyme 3 (492 aa).

Residues His65 and Asn138 contribute to the active site. Tyr347 contributes to the heme binding site.

This sequence belongs to the catalase family. In terms of assembly, homotetramer. Heme serves as cofactor. In terms of tissue distribution, abundant in green cotyledons, etiolated cotyledons, green hypocotyl and root, but not in young leaf.

The protein localises to the peroxisome. It catalyses the reaction 2 H2O2 = O2 + 2 H2O. Functionally, occurs in almost all aerobically respiring organisms and serves to protect cells from the toxic effects of hydrogen peroxide. This chain is Catalase isozyme 3 (CAT3), found in Cucurbita pepo (Vegetable marrow).